The primary structure comprises 141 residues: Hemoglobin subunit alpha-D (141 aa).

The region spanning 1–141 (MLNAEDKKLI…VSAVLAEKYR (141 aa)) is the Globin domain. 2 residues coordinate heme b: His58 and His87.

Belongs to the globin family. Heterotetramer of two alpha-D chains and two beta chains. As to expression, red blood cells.

Its function is as follows. Involved in oxygen transport from the lung to the various peripheral tissues. This Phasianus colchicus colchicus (Black-necked pheasant) protein is Hemoglobin subunit alpha-D (HBAD).